The primary structure comprises 72 residues: UPF0352 protein CGSHiGG_07710 (72 aa).

This sequence belongs to the UPF0352 family.

This is UPF0352 protein CGSHiGG_07710 from Haemophilus influenzae (strain PittGG).